The primary structure comprises 320 residues: MSTPTFVHRTVLLTEAVDALAIRPDGVYVDCTFGRGGHSRLILSKLGPSGRLIAFDKDPEAIAVADRLAAEDSRFNIVHNGFETLSAELARLGVAGVDGVLMDLGVSSPQIDDGSRGFSFRFDAPLDMRMDTTRGVTAAEWLATADEADIREVIKTYGEERFARKIAAAIVAQRDESPITTTRELAVLVGQNVRTREPGQDPATRTFQAIRIFVNRELDELKAVLPQAARLLNEGGRLAVISFHSLEDRIVKLYLRDVSSEEKLPAWAMVRAADMAQPPIDLVGKAIRAGDEEVRENPRARSAIMRVAQRTAAPWREGDA.

S-adenosyl-L-methionine-binding positions include 36-38 (GGH), D56, F82, D103, and Q110.

It belongs to the methyltransferase superfamily. RsmH family.

It localises to the cytoplasm. It carries out the reaction cytidine(1402) in 16S rRNA + S-adenosyl-L-methionine = N(4)-methylcytidine(1402) in 16S rRNA + S-adenosyl-L-homocysteine + H(+). Functionally, specifically methylates the N4 position of cytidine in position 1402 (C1402) of 16S rRNA. The polypeptide is Ribosomal RNA small subunit methyltransferase H (Chromobacterium violaceum (strain ATCC 12472 / DSM 30191 / JCM 1249 / CCUG 213 / NBRC 12614 / NCIMB 9131 / NCTC 9757 / MK)).